The following is a 236-amino-acid chain: Small ribosomal subunit protein uS2c (236 aa).

It belongs to the universal ribosomal protein uS2 family.

It localises to the plastid. The protein localises to the chloroplast. The chain is Small ribosomal subunit protein uS2c (rps2) from Zea mays (Maize).